Here is a 123-residue protein sequence, read N- to C-terminus: Large ribosomal subunit protein bL21 (123 aa).

Belongs to the bacterial ribosomal protein bL21 family. Part of the 50S ribosomal subunit. Contacts protein L20.

In terms of biological role, this protein binds to 23S rRNA in the presence of protein L20. The protein is Large ribosomal subunit protein bL21 of Sinorhizobium fredii (strain NBRC 101917 / NGR234).